A 303-amino-acid chain; its full sequence is tRNA-cytidine(32) 2-sulfurtransferase (303 aa).

The short motif at 49-54 (SGGKDS) is the PP-loop motif element. Residues Cys-124, Cys-127, and Cys-215 each coordinate [4Fe-4S] cluster.

This sequence belongs to the TtcA family. Homodimer. Requires Mg(2+) as cofactor. [4Fe-4S] cluster serves as cofactor.

The protein localises to the cytoplasm. It catalyses the reaction cytidine(32) in tRNA + S-sulfanyl-L-cysteinyl-[cysteine desulfurase] + AH2 + ATP = 2-thiocytidine(32) in tRNA + L-cysteinyl-[cysteine desulfurase] + A + AMP + diphosphate + H(+). The protein operates within tRNA modification. Functionally, catalyzes the ATP-dependent 2-thiolation of cytidine in position 32 of tRNA, to form 2-thiocytidine (s(2)C32). The sulfur atoms are provided by the cysteine/cysteine desulfurase (IscS) system. The protein is tRNA-cytidine(32) 2-sulfurtransferase of Anaeromyxobacter sp. (strain Fw109-5).